The chain runs to 55 residues: Spermatid nuclear transition protein 1 (55 aa).

The segment covering 1–42 (MSTSRKLKSHGMRRGKNRAPHKGVKRGGSKRKYRKGSLKSRK) has biased composition (basic residues). Positions 1–55 (MSTSRKLKSHGMRRGKNRAPHKGVKRGGSKRKYRKGSLKSRKRCDDANRNYRSHL) are disordered. A phosphoserine mark is found at Ser9, Ser37, and Ser40.

The protein belongs to the nuclear transition protein 1 family. In terms of tissue distribution, testis.

The protein localises to the nucleus. It is found in the chromosome. In terms of biological role, plays a key role in the replacement of histones to protamine in the elongating spermatids of mammals. In condensing spermatids, loaded onto the nucleosomes, where it promotes the recruitment and processing of protamines, which are responsible for histone eviction. The sequence is that of Spermatid nuclear transition protein 1 (TNP1) from Sus scrofa (Pig).